The following is a 437-amino-acid chain: UDP-sugar transporter protein SLC35A5 (437 aa).

The Cytoplasmic portion of the chain corresponds to 1-21 (MKVIFLRQLKTRGMERKCSRR). The helical transmembrane segment at 22-42 (PGLGPPTLYTFLLGIIFITLS) threads the bilayer. The Lumenal portion of the chain corresponds to 43 to 65 (SSRILLVKYSANEENKYDYLPTT). The chain crosses the membrane as a helical span at residues 66-86 (VNVCSELMKLILCILVSLCVI). At 87–106 (KKEDHQSRHLRCTSWKEFSS) the chain is on the cytoplasmic side. Residues 107–129 (FMKWSIPAFLYFLDNLIVFYVLS) traverse the membrane as a helical segment. The Lumenal portion of the chain corresponds to 130-132 (YLQ). Residues 133–155 (PAMAVIFSNFSIITTALLFRIVL) traverse the membrane as a helical segment. The Cytoplasmic segment spans residues 156–158 (KRH). Residues 159–179 (LNWIQWASLLILFLSIVALTA) form a helical membrane-spanning segment. At 180-241 (STKTSQHELA…TTARVFSHIR (62 aa)) the chain is on the lumenal side. A glycan (N-linked (GlcNAc...) asparagine) is linked at Asn217. A helical membrane pass occupies residues 242 to 262 (LGLGHVLIIVQCFISSMANIY). Topologically, residues 263-276 (NEKILKEGTQLTES) are cytoplasmic. Residues 277–297 (IFIQNSKLYFFGIVFNGLTLV) form a helical membrane-spanning segment. Residues 298-316 (LQSSNRDQIQNCGFFYGHN) are Lumenal-facing. The chain crosses the membrane as a helical span at residues 317-337 (AFSVVLIFVTAFQGLSVAFIL). Over 338 to 343 (KFLDNM) the chain is Cytoplasmic. The chain crosses the membrane as a helical span at residues 344 to 364 (FHVLMAQVTTVIITTVSVLVF). The Lumenal segment spans residues 365–367 (DFR). The helical transmembrane segment at 368–388 (PSLDFFLEAPSVLLSIFIYNA) threads the bilayer. The Cytoplasmic portion of the chain corresponds to 389-437 (SKPQNLECAPKQERIRHLSGSLWERSSGDGEELERLTKLKSDDSDDDTL). A phosphoserine mark is found at Ser407, Ser429, and Ser432. A disordered region spans residues 412–437 (ERSSGDGEELERLTKLKSDDSDDDTL). Residues 421–430 (LERLTKLKSD) are compositionally biased toward basic and acidic residues.

The protein belongs to the nucleotide-sugar transporter family. SLC35A subfamily. In terms of assembly, probably forms homooligomers and heterooligomers with SLC35A1, SLC35A2, SLC35A3 and SLC35A4.

It localises to the golgi apparatus membrane. It catalyses the reaction UMP(out) + UDP-alpha-D-glucuronate(in) = UMP(in) + UDP-alpha-D-glucuronate(out). It carries out the reaction UMP(out) + UDP-N-acetyl-alpha-D-glucosamine(in) = UMP(in) + UDP-N-acetyl-alpha-D-glucosamine(out). The enzyme catalyses UDP-N-acetyl-alpha-D-galactosamine(in) + UMP(out) = UDP-N-acetyl-alpha-D-galactosamine(out) + UMP(in). In terms of biological role, probable UDP-sugar:UMP transmembrane antiporter involved in UDP-alpha-D-glucuronate/UDP-GlcA, UDP-GlcNAc/UDP-N-acetyl-alpha-D-glucosamine and UDP-N-acetyl-alpha-D-galactosamine/UDP-GalNAc transport from the cytosol to the lumen of the Golgi. The protein is UDP-sugar transporter protein SLC35A5 of Mus musculus (Mouse).